The primary structure comprises 52 residues: Venom peptide 4a (52 aa).

Residues 1–23 (MRSAILLVIVAIVAILGFLGVNA) form the signal peptide. 3 AXPX repeats span residues 23 to 26 (AEPL), 31 to 34 (AEPN), and 39 to 42 (AAPL). The propeptide occupies 24 to 41 (EPLPSPLAEPNPHAKAAP). Position 51 is an alanine amide (Ala-51).

In terms of tissue distribution, expressed by the venom gland.

It localises to the secreted. The protein is Venom peptide 4a of Eumenes pomiformis (Potter wasp).